A 1270-amino-acid chain; its full sequence is DNA-directed RNA polymerase subunit beta (1270 aa).

The protein belongs to the RNA polymerase beta chain family. In terms of assembly, the RNAP catalytic core consists of 2 alpha, 1 beta, 1 beta' and 1 omega subunit. When a sigma factor is associated with the core the holoenzyme is formed, which can initiate transcription.

The enzyme catalyses RNA(n) + a ribonucleoside 5'-triphosphate = RNA(n+1) + diphosphate. DNA-dependent RNA polymerase catalyzes the transcription of DNA into RNA using the four ribonucleoside triphosphates as substrates. The sequence is that of DNA-directed RNA polymerase subunit beta from Bacteroides thetaiotaomicron (strain ATCC 29148 / DSM 2079 / JCM 5827 / CCUG 10774 / NCTC 10582 / VPI-5482 / E50).